A 382-amino-acid polypeptide reads, in one-letter code: Type II secretion system protein L (382 aa).

Topologically, residues 1–233 (MSGVSALFLP…QQSSQWRRWR (233 aa)) are cytoplasmic. Residues 234–254 (PLLGLVGLWLVLQWGFTLVQA) traverse the membrane as a helical segment. Residues 255 to 382 (WQLQREGDRY…TVSARLVIGG (128 aa)) lie on the Periplasmic side of the membrane.

This sequence belongs to the GSP L family. In terms of assembly, type II secretion system is composed of four main components: the outer membrane complex, the inner membrane complex, the cytoplasmic secretion ATPase and the periplasm-spanning pseudopilus. Forms homodimers. Interacts with XcpZ/GspM. Interacts with XcpR/GspE and XcpS/GspF.

It localises to the cell inner membrane. Functionally, inner membrane component of the type II secretion system required for the energy-dependent secretion of extracellular factors such as proteases and toxins from the periplasm. Plays a role in the complex assembly and recruits XcpZ resulting in a stable complex in the inner membrane. Provides thus a link between the energy-providing XcpR protein in the cytoplasm and the rest of the T2SS machinery. The protein is Type II secretion system protein L (xcpY) of Pseudomonas aeruginosa (strain ATCC 15692 / DSM 22644 / CIP 104116 / JCM 14847 / LMG 12228 / 1C / PRS 101 / PAO1).